Reading from the N-terminus, the 88-residue chain is Small ribosomal subunit protein uS17 (88 aa).

This sequence belongs to the universal ribosomal protein uS17 family. In terms of assembly, part of the 30S ribosomal subunit.

Functionally, one of the primary rRNA binding proteins, it binds specifically to the 5'-end of 16S ribosomal RNA. The sequence is that of Small ribosomal subunit protein uS17 from Saccharophagus degradans (strain 2-40 / ATCC 43961 / DSM 17024).